A 627-amino-acid polypeptide reads, in one-letter code: 1-deoxy-D-xylulose-5-phosphate synthase (627 aa).

Thiamine diphosphate contacts are provided by residues H80 and 121 to 123 (GHS). D152 provides a ligand contact to Mg(2+). Residues 153–154 (GA), N181, Y288, and E370 each bind thiamine diphosphate. Position 181 (N181) interacts with Mg(2+).

Belongs to the transketolase family. DXPS subfamily. Homodimer. The cofactor is Mg(2+). Requires thiamine diphosphate as cofactor.

The catalysed reaction is D-glyceraldehyde 3-phosphate + pyruvate + H(+) = 1-deoxy-D-xylulose 5-phosphate + CO2. It functions in the pathway metabolic intermediate biosynthesis; 1-deoxy-D-xylulose 5-phosphate biosynthesis; 1-deoxy-D-xylulose 5-phosphate from D-glyceraldehyde 3-phosphate and pyruvate: step 1/1. Catalyzes the acyloin condensation reaction between C atoms 2 and 3 of pyruvate and glyceraldehyde 3-phosphate to yield 1-deoxy-D-xylulose-5-phosphate (DXP). The polypeptide is 1-deoxy-D-xylulose-5-phosphate synthase (Aliivibrio salmonicida (strain LFI1238) (Vibrio salmonicida (strain LFI1238))).